A 159-amino-acid polypeptide reads, in one-letter code: Galactose-specific lectin nattectin (159 aa).

An N-terminal signal peptide occupies residues 1–21 (MASVPHFTVFLFLACALGIGA). The propeptide occupies 22 to 24 (NVT). Intrachain disulfides connect Cys31/Cys42, Cys59/Cys155, and Cys132/Cys147. A C-type lectin domain is found at 38–156 (HGSRCFTFHR…CKVKRSFLCA (119 aa)). Ca(2+) contacts are provided by Gln122, Asp124, Glu130, and Asn143. Residues 122-124 (QPD) carry the Galactose-binding motif.

Monomer. In terms of processing, not glycosylated. In terms of tissue distribution, expressed by the venom gland.

Its subcellular location is the secreted. Its function is as follows. Galactose specific lectin that exhibits hemagglutination activity (minimum hemagluttination concentration = 2.5 ug/well) in a calcium-independent fashion. Has remarkable pro-inflammatory activity, inducing neutrophil mobilization in mice. Plays a crucial role in the innate immune system and chronic manifestations, especially in neutrophil mobilization. The protein is Galactose-specific lectin nattectin of Thalassophryne nattereri (Copper Joe toadfish).